The primary structure comprises 518 residues: DNA nucleotidylexotransferase (518 aa).

The Nuclear localization signal motif lies at 11–17; the sequence is FGKKRQK. Residues 27–124 form the BRCT domain; sequence IYEIKFHEFV…KPVDTKGKYQ (98 aa). The mediates interaction with DNTTIP2 stretch occupies residues 153–518; that stretch reads SQYACQRRTT…EYIQPSERNA (366 aa). Residues 260–264 are involved in DNA binding; sequence VGLKT. A 2'-deoxyribonucleoside 5'-triphosphate-binding positions include 335 to 340 and 344 to 347; these read GFRRGK and HDVD. Positions 345, 347, and 442 each coordinate Mg(2+). Residue 457–458 participates in a 2'-deoxyribonucleoside 5'-triphosphate binding; it reads GW.

The protein belongs to the DNA polymerase type-X family. As to quaternary structure, interacts with PRP19 and DNTTIP1. Interacts with TRERF1. Forms a ternary complex with DNTTIP2 and core histone. Released from this complex by PCNA. Requires Mg(2+) as cofactor.

The protein resides in the nucleus. It catalyses the reaction DNA(n) + a 2'-deoxyribonucleoside 5'-triphosphate = DNA(n+1) + diphosphate. Template-independent DNA polymerase which catalyzes the random addition of deoxynucleoside 5'-triphosphate to the 3'-end of a DNA initiator. One of the in vivo functions of this enzyme is the addition of nucleotides at the junction (N region) of rearranged Ig heavy chain and T-cell receptor gene segments during the maturation of B- and T-cells. The sequence is that of DNA nucleotidylexotransferase (DNTT) from Monodelphis domestica (Gray short-tailed opossum).